Here is a 23-residue protein sequence, read N- to C-terminus: Phallacidin proprotein 1 (23 aa).

P1 is a propeptide. The segment at residues 2–8 (AWLVDCP) is a cross-link (cyclopeptide (Ala-Pro)). The 2'-cysteinyl-6'-hydroxytryptophan sulfoxide (Trp-Cys) cross-link spans 3–7 (WLVDC). Positions 9 to 23 (CVGDDVNRLLTRGER) are excised as a propeptide.

The protein belongs to the MSDIN fungal toxin family. Post-translationally, processed by the macrocyclase-peptidase enzyme POPB to yield a toxic cyclic heptapeptide. POPB first removes 10 residues from the N-terminus. Conformational trapping of the remaining peptide forces the enzyme to release this intermediate rather than proceed to macrocyclization. The enzyme rebinds the remaining peptide in a different conformation and catalyzes macrocyclization of the N-terminal 7 residues.

Its function is as follows. Toxin that belongs to the bicyclic heptapeptides called phallotoxins. Although structurally related to amatoxins, phallotoxins have a different mode of action, which is the stabilization of F-actin. Phallotoxins are poisonous when administered parenterally, but not orally because of poor absorption. The chain is Phallacidin proprotein 1 from Amanita exitialis (Guangzhou destroying angel).